A 366-amino-acid polypeptide reads, in one-letter code: Chorismate synthase (366 aa).

The NADP(+) site is built by Arg48 and Arg54. FMN is bound by residues 125–127 (RSS), 238–239 (NA), Gly278, 293–297 (KPTSS), and Arg319.

This sequence belongs to the chorismate synthase family. Homotetramer. It depends on FMNH2 as a cofactor.

The catalysed reaction is 5-O-(1-carboxyvinyl)-3-phosphoshikimate = chorismate + phosphate. Its pathway is metabolic intermediate biosynthesis; chorismate biosynthesis; chorismate from D-erythrose 4-phosphate and phosphoenolpyruvate: step 7/7. Its function is as follows. Catalyzes the anti-1,4-elimination of the C-3 phosphate and the C-6 proR hydrogen from 5-enolpyruvylshikimate-3-phosphate (EPSP) to yield chorismate, which is the branch point compound that serves as the starting substrate for the three terminal pathways of aromatic amino acid biosynthesis. This reaction introduces a second double bond into the aromatic ring system. In Paraburkholderia phytofirmans (strain DSM 17436 / LMG 22146 / PsJN) (Burkholderia phytofirmans), this protein is Chorismate synthase.